Here is a 57-residue protein sequence, read N- to C-terminus: Small hydrophobic protein (57 aa).

Over 1–8 (MPLIQPPL) the chain is Virion surface. The helical transmembrane segment at 9-29 (YLTFLLLMLLYRIITLYVWSL) threads the bilayer. Over 30 to 57 (STITYKTSVRHASLYQRSFFRWSVDHSL) the chain is Intravirion.

It belongs to the rubulavirus small hydrophobic protein family. In terms of assembly, interacts with host TNFRSF1A, RIPK1 and IRAK1; these interactions interfere with host NF-kappa-B activation at the level of receptor complexes. Interacts with host protein UBQLN4.

The protein resides in the virion membrane. It localises to the host cell membrane. Plays a role in the inhibition of the host NF-kappa-B pathway. This inhibition occurs at the receptor level, by preventing the signaling of TNFR1 as well as IL-1R and TLR3. The protein is Small hydrophobic protein (SH) of Homo sapiens (Human).